The primary structure comprises 450 residues: Phosphoglucosamine mutase (450 aa).

Serine 102 acts as the Phosphoserine intermediate in catalysis. 4 residues coordinate Mg(2+): serine 102, aspartate 242, aspartate 244, and aspartate 246. Serine 102 carries the phosphoserine modification.

The protein belongs to the phosphohexose mutase family. The cofactor is Mg(2+). In terms of processing, activated by phosphorylation.

The enzyme catalyses alpha-D-glucosamine 1-phosphate = D-glucosamine 6-phosphate. Its function is as follows. Catalyzes the conversion of glucosamine-6-phosphate to glucosamine-1-phosphate. This chain is Phosphoglucosamine mutase, found in Staphylococcus haemolyticus (strain JCSC1435).